The following is a 289-amino-acid chain: Elongation factor Ts (289 aa).

The interval 80 to 83 (TDFV) is involved in Mg(2+) ion dislocation from EF-Tu.

The protein belongs to the EF-Ts family.

The protein resides in the cytoplasm. Its function is as follows. Associates with the EF-Tu.GDP complex and induces the exchange of GDP to GTP. It remains bound to the aminoacyl-tRNA.EF-Tu.GTP complex up to the GTP hydrolysis stage on the ribosome. The sequence is that of Elongation factor Ts from Francisella tularensis subsp. tularensis (strain FSC 198).